A 183-amino-acid chain; its full sequence is Probable chemoreceptor glutamine deamidase CheD (183 aa).

It belongs to the CheD family.

The enzyme catalyses L-glutaminyl-[protein] + H2O = L-glutamyl-[protein] + NH4(+). Functionally, probably deamidates glutamine residues to glutamate on methyl-accepting chemotaxis receptors (MCPs), playing an important role in chemotaxis. This is Probable chemoreceptor glutamine deamidase CheD from Zymomonas mobilis subsp. mobilis (strain ATCC 31821 / ZM4 / CP4).